The following is an 86-amino-acid chain: MNSKIFAVLFLLAFLSCVLSDQYCPKSSITACKKMNIRNDCCKDDDCTGGSWCCATPCGNFCKYPTDRPGGKRAAGGKSCKTSYVY.

The first 20 residues, 1 to 20 (MNSKIFAVLFLLAFLSCVLS), serve as a signal peptide directing secretion. Positions 21–66 (DQYCPKSSITACKKMNIRNDCCKDDDCTGGSWCCATPCGNFCKYPT) constitute a WAP domain. 5 disulfide bridges follow: cysteine 24–cysteine 54, cysteine 32–cysteine 58, cysteine 41–cysteine 53, cysteine 42–cysteine 80, and cysteine 47–cysteine 62.

Belongs to the venom protein 11 family. 01 (wap-1) subfamily. Contains 5 disulfide bonds. As to expression, expressed by the venom gland.

It is found in the secreted. Its function is as follows. Has antibacterial activity. The chain is U15-lycotoxin-Ls1a from Lycosa singoriensis (Wolf spider).